The sequence spans 103 residues: Large ribosomal subunit protein bL21 (103 aa).

This sequence belongs to the bacterial ribosomal protein bL21 family. As to quaternary structure, part of the 50S ribosomal subunit. Contacts protein L20.

This protein binds to 23S rRNA in the presence of protein L20. This is Large ribosomal subunit protein bL21 from Pseudomonas aeruginosa (strain LESB58).